Consider the following 316-residue polypeptide: CD276 antigen (316 aa).

The first 28 residues, 1 to 28, serve as a signal peptide directing secretion; sequence MLRGWGGPSVGVSMGTALGVLCLCLTGA. The Ig-like V-type domain maps to 29–139; sequence VEVQVSEDPV…DSAAVSLQVA (111 aa). The Extracellular segment spans residues 29–248; sequence VEVQVSEDPV…GQPMTFPPEA (220 aa). N104, N189, and N215 each carry an N-linked (GlcNAc...) asparagine glycan. Residues 145–238 enclose the Ig-like C2-type domain; sequence PSMTLEPNKD…QDAHGSVTIT (94 aa). An intrachain disulfide couples C165 to C220. A helical membrane pass occupies residues 249 to 269; it reads LWVTVGLSVCLVILLVALAFV. At 270-316 the chain is on the cytoplasmic side; the sequence is CWRKIKQSCEEENAGAEDQDGDGEGSKTALRPLKHSENKEDDGQEIA. The span at 281–292 shows a compositional bias: acidic residues; sequence ENAGAEDQDGDG. Positions 281-316 are disordered; the sequence is ENAGAEDQDGDGEGSKTALRPLKHSENKEDDGQEIA.

The protein belongs to the immunoglobulin superfamily. BTN/MOG family. Interacts with TREML2 and this interaction enhances T-cell activation.

It localises to the membrane. In terms of biological role, modulates T-cell-mediated immune responses and the development of acute and chronic transplant rejection. May play a positive regulatory role in bone formation and has a dual role in the bone-immune interface. Induces antitumor immunity as it activates both acquired and innate immunity leading to natural killer cell and CD8 T-cell dependent killing of tumor cells. The chain is CD276 antigen (Cd276) from Rattus norvegicus (Rat).